The following is a 639-amino-acid chain: MSASTSTTAAASQDACYISLLGLAEYFRTSQPPNIKKCIQCLQALFTFMPPSKVEARTHLQMGQILMAYTQNIDLARHHLEKAWSISEPLANFDVKFDTASLLAQLHLQTDQNSNQAKAMLRRAVELSQHNVYWHCKLLLQLAQIHASDREYSLASDLLAVGAENADEAGATYLKVLFLLSRAMILMIERKTNDVLALLNSAGQIIDNNIPNPHQKEYLKVFFLVLQVCYYLALGQVKTVKPSLKQLQMSIQTIMAPNWPSDETIFGANQLEMFVWLPKEQLYVLVYLVTVSHSMMAGYMDKAQKYTEKALTQIEKLKQQEDKPILSVFKVILLEHIVMCRMVMGNRELAIREIAAARDVCLAAPQRSLLRRHSAQLHCLIGLYSMSTSFFEHAERQFLVCVSETNERDLKLFANLNLAIIYLRTKRDTDLKQILDAVSSENTNTYSSQALMGGFYYVQGLHAFHKNSFHEAKRFLRETLKMANAEDLNRLTSCSLVLLSHVFLSIGNSKESMNMVTPAMQLASKIPDIHVQLWGSAILKDLHRMSKDAQHEKDAYANHLKYSENLIADQRKSVQSSHHELVNWFHGDPPVTSGPPTTTAVAMILPDSSAAVGPVPVIASTSTGMQQAIQPVGQYGQFY.

TPR repeat units lie at residues 453-486 (GGFY…ANAE) and 493-526 (SCSL…ASKI).

This sequence belongs to the SCC4/mau-2 family. In terms of assembly, interacts with Nipped-B to form the cohesin loading complex.

Its subcellular location is the nucleus. It localises to the nucleoplasm. In terms of biological role, required for association of the cohesin complex with chromatin during interphase. Plays a role in sister chromatid cohesion and normal progression through prometaphase. This Drosophila ananassae (Fruit fly) protein is MAU2 chromatid cohesion factor homolog.